A 115-amino-acid chain; its full sequence is NADH-ubiquinone oxidoreductase chain 3 (115 aa).

Transmembrane regions (helical) follow at residues 3–23, 55–75, and 84–104; these read LMLA…IMFW, FFLV…LLSL, and LPTM…SLAY.

Belongs to the complex I subunit 3 family. As to quaternary structure, core subunit of respiratory chain NADH dehydrogenase (Complex I) which is composed of 45 different subunits. Interacts with TMEM186. Interacts with TMEM242.

Its subcellular location is the mitochondrion inner membrane. It carries out the reaction a ubiquinone + NADH + 5 H(+)(in) = a ubiquinol + NAD(+) + 4 H(+)(out). Functionally, core subunit of the mitochondrial membrane respiratory chain NADH dehydrogenase (Complex I) which catalyzes electron transfer from NADH through the respiratory chain, using ubiquinone as an electron acceptor. Essential for the catalytic activity of complex I. This Papio hamadryas (Hamadryas baboon) protein is NADH-ubiquinone oxidoreductase chain 3.